The primary structure comprises 283 residues: Phospholipase C (283 aa).

A signal peptide spans 1–24 (MKKKVLALAAAITVVAPLQSVAFA). Residues 25–38 (HENDGGSKIKIVHR) constitute a propeptide that is removed on maturation. Residues W39, H52, D93, H107, H156, D160, H166, H180, and E184 each contribute to the Zn(2+) site. Residues 39 to 283 (WSAEDKHKEG…QLWFDTYGDR (245 aa)) enclose the Zn-dependent PLC domain.

Belongs to the bacterial zinc-metallophospholipase C family. In terms of assembly, monomer. Requires Zn(2+) as cofactor.

The catalysed reaction is a 1,2-diacyl-sn-glycero-3-phosphocholine + H2O = phosphocholine + a 1,2-diacyl-sn-glycerol + H(+). In terms of biological role, required, with sphingomyelinase, to effect target cell lysis (hemolysis). This is Phospholipase C (plc) from Bacillus cereus.